We begin with the raw amino-acid sequence, 128 residues long: Large ribosomal subunit protein bL12 (128 aa).

It belongs to the bacterial ribosomal protein bL12 family. In terms of assembly, homodimer. Part of the ribosomal stalk of the 50S ribosomal subunit. Forms a multimeric L10(L12)X complex, where L10 forms an elongated spine to which 2 to 4 L12 dimers bind in a sequential fashion. Binds GTP-bound translation factors.

Its function is as follows. Forms part of the ribosomal stalk which helps the ribosome interact with GTP-bound translation factors. Is thus essential for accurate translation. This Synechococcus sp. (strain CC9311) protein is Large ribosomal subunit protein bL12.